Reading from the N-terminus, the 479-residue chain is Ribulose bisphosphate carboxylase large chain 2 (479 aa).

Residues asparagine 116 and threonine 166 each coordinate substrate. The active-site Proton acceptor is lysine 168. Substrate is bound at residue lysine 170. Mg(2+) contacts are provided by lysine 194, aspartate 196, and glutamate 197. Lysine 194 is subject to N6-carboxylysine. Histidine 287 acts as the Proton acceptor in catalysis. 3 residues coordinate substrate: arginine 288, histidine 320, and serine 372.

Belongs to the RuBisCO large chain family. Type I subfamily. In terms of assembly, heterohexadecamer of 8 large chains and 8 small chains. Mg(2+) is required as a cofactor.

The enzyme catalyses 2 (2R)-3-phosphoglycerate + 2 H(+) = D-ribulose 1,5-bisphosphate + CO2 + H2O. The catalysed reaction is D-ribulose 1,5-bisphosphate + O2 = 2-phosphoglycolate + (2R)-3-phosphoglycerate + 2 H(+). Its function is as follows. RuBisCO catalyzes two reactions: the carboxylation of D-ribulose 1,5-bisphosphate, the primary event in carbon dioxide fixation, as well as the oxidative fragmentation of the pentose substrate. Both reactions occur simultaneously and in competition at the same active site. The protein is Ribulose bisphosphate carboxylase large chain 2 of Bradyrhizobium sp. (strain ORS 278).